A 547-amino-acid polypeptide reads, in one-letter code: Chaperonin GroEL (547 aa).

Residues 30–33, Lys51, 87–91, Gly415, 479–481, and Asp495 contribute to the ATP site; these read TLGP, DGTTT, and NAA.

The protein belongs to the chaperonin (HSP60) family. As to quaternary structure, forms a cylinder of 14 subunits composed of two heptameric rings stacked back-to-back. Interacts with the co-chaperonin GroES.

Its subcellular location is the cytoplasm. It catalyses the reaction ATP + H2O + a folded polypeptide = ADP + phosphate + an unfolded polypeptide.. In terms of biological role, together with its co-chaperonin GroES, plays an essential role in assisting protein folding. The GroEL-GroES system forms a nano-cage that allows encapsulation of the non-native substrate proteins and provides a physical environment optimized to promote and accelerate protein folding. In Delftia acidovorans (strain DSM 14801 / SPH-1), this protein is Chaperonin GroEL.